A 240-amino-acid chain; its full sequence is Homeobox protein goosecoid (240 aa).

A DNA-binding region (homeobox) is located at residues 146-205 (KRRHRTIFTDEQLEALENLFQETKYPDVGTREQLARKVHLREEKVEVWFKNRRAKWRRQK). Residues 199–240 (AKWRRQKRSSSEESENSQKWNKSTKTTSEKIEEGKSDVDSDS) form a disordered region. Residues 225–240 (TSEKIEEGKSDVDSDS) show a composition bias toward basic and acidic residues.

This sequence belongs to the paired homeobox family. Bicoid subfamily.

The protein localises to the nucleus. The chain is Homeobox protein goosecoid (gsc) from Danio rerio (Zebrafish).